The primary structure comprises 278 residues: 4-deoxy-L-threo-5-hexosulose-uronate ketol-isomerase (278 aa).

Zn(2+) is bound by residues H196, H198, E203, and H245.

It belongs to the KduI family. It depends on Zn(2+) as a cofactor.

It catalyses the reaction 5-dehydro-4-deoxy-D-glucuronate = 3-deoxy-D-glycero-2,5-hexodiulosonate. The protein operates within glycan metabolism; pectin degradation; 2-dehydro-3-deoxy-D-gluconate from pectin: step 4/5. Catalyzes the isomerization of 5-dehydro-4-deoxy-D-glucuronate to 3-deoxy-D-glycero-2,5-hexodiulosonate. This Salmonella choleraesuis (strain SC-B67) protein is 4-deoxy-L-threo-5-hexosulose-uronate ketol-isomerase.